The chain runs to 273 residues: Homeobox protein Nkx-2.2 (273 aa).

Disordered stretches follow at residues 1-56 and 91-131; these read MSLT…LDAV and AASA…KRKR. The span at 20-38 shows a compositional bias: acidic residues; that stretch reads DTNDEEGSVAEGPEEESEG. The homeobox DNA-binding region spans 128 to 187; the sequence is KRKRRVLFSKAQTYELERRFRQQRYLSAPEREHLASLIRLTPTQVKIWFQNHRYKMKRAR.

Belongs to the NK-2 homeobox family. In terms of assembly, interacts with OLIG2.

It is found in the nucleus. Functionally, transcriptional activator involved in the development of insulin-producting beta cells in the endocrine pancreas. May also be involved in specifying diencephalic neuromeric boundaries, and in controlling the expression of genes that play a role in axonal guidance. Binds to elements within the NEUROD1 promoter. The sequence is that of Homeobox protein Nkx-2.2 (NKX2-2) from Mesocricetus auratus (Golden hamster).